The primary structure comprises 215 residues: UPF0502 protein YceH (215 aa).

Lys-80 is subject to N6-acetyllysine.

This sequence belongs to the UPF0502 family.

This chain is UPF0502 protein YceH, found in Shigella flexneri serotype 5b (strain 8401).